A 71-amino-acid chain; its full sequence is MNDLKLLRSKLSTETIEELYKNLNLLKKELFNLRFQQALGELKNTSRFLLVKKSIARIKTELTKRSNSEEY.

This sequence belongs to the universal ribosomal protein uL29 family.

The protein is Large ribosomal subunit protein uL29 of Rickettsia massiliae (strain Mtu5).